A 210-amino-acid polypeptide reads, in one-letter code: Phosphate propanoyltransferase (210 aa).

26–28 contributes to the CoA binding site; it reads ISN. Zn(2+) contacts are provided by H30 and H32. K71 and R78 together coordinate CoA. Phosphate is bound at residue R84. Residues E90, H138, H140, and H186 each contribute to the Zn(2+) site. N193 contributes to the CoA binding site.

It belongs to the PduL family. Zn(2+) is required as a cofactor.

It localises to the bacterial microcompartment. The catalysed reaction is propanoyl-CoA + phosphate = propanoyl phosphate + CoA. It participates in polyol metabolism; 1,2-propanediol degradation. Involved in 1,2-propanediol (1,2-PD) utilization within the bacterial microcompartment (BMC) dedicated to 1,2-PD degradation by catalyzing the conversion of propanoyl-CoA to propanoyl-phosphate. Required for optimal growth on 1,2-PD. CoA is regenerated within the BMC (for use by PduP) via this enzyme, although there must also be cofactor transport across the BMC. Directly targeted to the BMC. Functionally, expression of a cosmid containing the full 21-gene pdu operon in E.coli allows E.coli to grow on 1,2-propanediol (1,2-PD) with the appearance of bacterial microcompartments (BMC) in its cytoplasm. Its function is as follows. The 1,2-PD-specific bacterial microcompartment (BMC) concentrates low levels of 1,2-PD catabolic enzymes, concentrates volatile reaction intermediates thus enhancing pathway flux and keeps the level of toxic, mutagenic propionaldehyde low. The polypeptide is Phosphate propanoyltransferase (Citrobacter freundii).